We begin with the raw amino-acid sequence, 104 residues long: Large ribosomal subunit protein uL24 (104 aa).

It belongs to the universal ribosomal protein uL24 family. In terms of assembly, part of the 50S ribosomal subunit.

Its function is as follows. One of two assembly initiator proteins, it binds directly to the 5'-end of the 23S rRNA, where it nucleates assembly of the 50S subunit. One of the proteins that surrounds the polypeptide exit tunnel on the outside of the subunit. The protein is Large ribosomal subunit protein uL24 of Buchnera aphidicola subsp. Schizaphis graminum (strain Sg).